The primary structure comprises 614 residues: Maltose permease MAL61 (614 aa).

The tract at residues 1-48 is disordered; the sequence is MKGLSSLINRKKDRNDSHLDEIENGVNATEFNSIEMEEQGKKSDFDLS. Over 1 to 108 the chain is Cytoplasmic; that stretch reads MKGLSSLINR…AAAWSLLVST (108 aa). The segment covering 38 to 48 has biased composition (basic and acidic residues); that stretch reads EQGKKSDFDLS. The helical transmembrane segment at 109-129 threads the bilayer; it reads TLIQEGYDTAILGAFYALPVF. Over 130–144 the chain is Extracellular; it reads QKKYGSLNSNTGDYE. Residues 145–165 form a helical membrane-spanning segment; it reads ISVSWQIGLCLCYMAGEIVGL. At 166–180 the chain is on the cytoplasmic side; that stretch reads QVTGPSVDYMGNRYT. Residues 181–201 traverse the membrane as a helical segment; sequence LIMALFFLAAFIFILYFCKSL. Residue glycine 202 is a topological domain, extracellular. A helical membrane pass occupies residues 203–223; that stretch reads MIAVGQALCGMPWGCFQCLTV. The Cytoplasmic portion of the chain corresponds to 224 to 236; sequence SYASEICPLALRY. A helical membrane pass occupies residues 237–257; that stretch reads YLTTYSNLCWTFGQLFAAGIM. Residues 258–272 are Extracellular-facing; sequence KNSQNKYANSELGYK. A helical membrane pass occupies residues 273 to 293; the sequence is LPFALQWIWPLPLAVGIFLAP. At 294 to 364 the chain is on the cytoplasmic side; that stretch reads ESPWWLVKKG…KDGINRRRTR (71 aa). A helical transmembrane segment spans residues 365-385; that stretch reads IACLCWIGQCSCGASLIGYST. Residues 386–398 are Extracellular-facing; the sequence is YFYEKAGVSTDTA. Residues 399–419 traverse the membrane as a helical segment; sequence FTFSIIQYCLGIAATFVSWWA. Residues 420–427 lie on the Cytoplasmic side of the membrane; it reads SKYCGRFD. A helical membrane pass occupies residues 428 to 448; the sequence is LYAFGLAFQAIMFFIIGGLGC. Residues 449-460 are Extracellular-facing; it reads SDTHGAKMGSGA. A helical transmembrane segment spans residues 461–481; the sequence is LLMVVAFFYNLGIAPVVFCLV. Residues 482-493 lie on the Cytoplasmic side of the membrane; it reads SEMPSSRLRTKT. The helical transmembrane segment at 494–514 threads the bilayer; the sequence is IILARNAYNVIQVVVTVLIMY. The Extracellular segment spans residues 515 to 526; sequence QLNSEKWNWGAK. A helical membrane pass occupies residues 527-547; the sequence is SGFFWGGFCLATLAWAVVDLP. The Cytoplasmic portion of the chain corresponds to 548 to 614; it reads ETAGRTFIEI…GRSTPSVVNK (67 aa). Residues 594–614 are disordered; that stretch reads KEDLETSVVDEGRSTPSVVNK.

Belongs to the major facilitator superfamily. Sugar transporter (TC 2.A.1.1) family.

The protein localises to the membrane. In terms of biological role, transporter for maltose. The chain is Maltose permease MAL61 (MAL61) from Saccharomyces cerevisiae (Baker's yeast).